A 117-amino-acid polypeptide reads, in one-letter code: Immunoglobulin kappa variable 1-9 (117 aa).

The first 22 residues, 1 to 22 (MDMRVPAQLLGLLLLWLPGARC), serve as a signal peptide directing secretion. The interval 23–45 (DIQLTQSPSFLSASVGDRVTITC) is framework-1. The Ig-like domain occupies 24–117 (IQLTQSPSFL…YYCQQLNSYP (94 aa)). A disulfide bridge connects residues Cys45 and Cys110. Positions 46-56 (RASQGISSYLA) are complementarity-determining-1. The interval 57–71 (WYQQKPGKAPKLLIY) is framework-2. Positions 72–78 (AASTLQS) are complementarity-determining-2. The framework-3 stretch occupies residues 79–110 (GVPSRFSGSGSGTEFTLTISSLQPEDFATYYC). A complementarity-determining-3 region spans residues 111–117 (QQLNSYP).

As to quaternary structure, immunoglobulins are composed of two identical heavy chains and two identical light chains; disulfide-linked.

Its subcellular location is the secreted. The protein localises to the cell membrane. Functionally, v region of the variable domain of immunoglobulin light chains that participates in the antigen recognition. Immunoglobulins, also known as antibodies, are membrane-bound or secreted glycoproteins produced by B lymphocytes. In the recognition phase of humoral immunity, the membrane-bound immunoglobulins serve as receptors which, upon binding of a specific antigen, trigger the clonal expansion and differentiation of B lymphocytes into immunoglobulins-secreting plasma cells. Secreted immunoglobulins mediate the effector phase of humoral immunity, which results in the elimination of bound antigens. The antigen binding site is formed by the variable domain of one heavy chain, together with that of its associated light chain. Thus, each immunoglobulin has two antigen binding sites with remarkable affinity for a particular antigen. The variable domains are assembled by a process called V-(D)-J rearrangement and can then be subjected to somatic hypermutations which, after exposure to antigen and selection, allow affinity maturation for a particular antigen. In Homo sapiens (Human), this protein is Immunoglobulin kappa variable 1-9.